A 445-amino-acid polypeptide reads, in one-letter code: 3-phosphoshikimate 1-carboxyvinyltransferase (445 aa).

Residues 1–25 (MSGHGPAQPMTARRSGPLKGRAEIP) are disordered. Residues Lys28, Ser29, and Arg33 each coordinate 3-phosphoshikimate. Position 28 (Lys28) interacts with phosphoenolpyruvate. Residues Gly101 and Arg129 each contribute to the phosphoenolpyruvate site. Residues Ser174, Gln176, Asp326, and Lys353 each coordinate 3-phosphoshikimate. Gln176 provides a ligand contact to phosphoenolpyruvate. Catalysis depends on Asp326, which acts as the Proton acceptor. 2 residues coordinate phosphoenolpyruvate: Arg357 and Arg400.

This sequence belongs to the EPSP synthase family. As to quaternary structure, monomer.

Its subcellular location is the cytoplasm. It carries out the reaction 3-phosphoshikimate + phosphoenolpyruvate = 5-O-(1-carboxyvinyl)-3-phosphoshikimate + phosphate. It functions in the pathway metabolic intermediate biosynthesis; chorismate biosynthesis; chorismate from D-erythrose 4-phosphate and phosphoenolpyruvate: step 6/7. Its function is as follows. Catalyzes the transfer of the enolpyruvyl moiety of phosphoenolpyruvate (PEP) to the 5-hydroxyl of shikimate-3-phosphate (S3P) to produce enolpyruvyl shikimate-3-phosphate and inorganic phosphate. The protein is 3-phosphoshikimate 1-carboxyvinyltransferase of Cereibacter sphaeroides (strain ATCC 17029 / ATH 2.4.9) (Rhodobacter sphaeroides).